A 407-amino-acid polypeptide reads, in one-letter code: uncharacterized protein (407 aa).

An EAL domain is found at 1 to 250; sequence MLDPLDILTN…LERDVLKQRL (250 aa).

This is an uncharacterized protein from Bacillus subtilis (strain 168).